The sequence spans 197 residues: Fucoxanthin-chlorophyll a-c binding protein F, chloroplastic (197 aa).

Residues 1–31 (MKFAVFASLLASAAAFAPAQQSARTSVATNM) constitute a chloroplast transit peptide. The next 3 helical transmembrane spans lie at 73–94 (ISML…PGDI), 114–134 (ISTA…IAVM), and 174–196 (GRAA…SLIP).

It belongs to the fucoxanthin chlorophyll protein family. In terms of assembly, the LHC complex of chromophytic algae is composed of fucoxanthin, chlorophyll A and C bound non-covalently by fucoxanthin chlorophyll proteins (FCPs). The ratio of the pigments in lhc; fucoxanthin: chlorophyll C: chlorophyll A is (0.6-1): (0.1-0.3): (1).

It is found in the plastid. Its subcellular location is the chloroplast thylakoid membrane. Its function is as follows. The light-harvesting complex (LHC) functions as a light receptor, it captures and delivers excitation energy to photosystems with which it is closely associated. In chromophytic algae, LHC is associated with photosystem II, energy being transferred from fucoxanthin and chlorophyll C to chlorophyll A and the photosynthetic reaction centers where it is used to synthesize ATP and reducing power. The sequence is that of Fucoxanthin-chlorophyll a-c binding protein F, chloroplastic (FCPF) from Phaeodactylum tricornutum (Diatom).